Consider the following 74-residue polypeptide: Tau-AnmTx Ueq 12-1 (74 aa).

The first 18 residues, M1–S18, serve as a signal peptide directing secretion. Positions A19–K27 are cleaved as a propeptide — removed in mature form. Disulfide bonds link C30-C37, C40-C71, C46-C64, C51-C72, and C58-C73.

This sequence belongs to the Cnidaria small cysteine-rich protein (SCRiP) family. Detected in mucus secreted from ectoderm.

It localises to the secreted. In terms of biological role, potentiates activation of mammalian TRPA1, a non-selective cation channel involved in perception of pain, in vitro yet has an analgesic and anti-inflammatory effect in vivo. Has antibacterial activity against C.glutamicum (MIC=50 uM) and, to a lesser extent, against S.aureus but not against P.aeruginosa or E.coli. In Urticina eques (Sea anemone), this protein is Tau-AnmTx Ueq 12-1.